Reading from the N-terminus, the 289-residue chain is MKKLSFQQIILTLQNYWQDYGCGILQPYDAHVGAGTFHPATVLRCLGTKPWSVAYVQPSRRPGDSRYGMHPNRMQHYYQFQVILKPSPDDIQDLYLKNLECLGIDLKNHDIRFVEDDWESPTLGASGLGWEVWCDGMEVSQFTYMQQIGGIECRPVACEITYGLERLALYIQGVDVVKALDWNGQIGEKALKYGEVDFEAERQFSKYNLELADSKMLLRHFKDSEEQCERLVKANLPMPAYDECLKASHYFNQLNALGVISVTERASYVLRVRHLARICCMKWLELSGE.

Belongs to the class-II aminoacyl-tRNA synthetase family. In terms of assembly, tetramer of two alpha and two beta subunits.

The protein localises to the cytoplasm. It catalyses the reaction tRNA(Gly) + glycine + ATP = glycyl-tRNA(Gly) + AMP + diphosphate. This Rickettsia akari (strain Hartford) protein is Glycine--tRNA ligase alpha subunit.